The primary structure comprises 307 residues: 4-hydroxybenzoate geranyltransferase 1 (307 aa).

The next 8 helical transmembrane spans lie at 38–58 (PIGS…AADL), 62–82 (PKML…GCTI), 120–140 (LFIG…LAIV), 154–174 (ITYW…LLGS), 179–199 (GSVV…WTLV), 230–250 (MWIS…GLIL), 252–272 (IGLP…WQIF), and 286–306 (FVSN…GRLF).

This sequence belongs to the UbiA prenyltransferase family. Requires Mg(2+) as cofactor. Expressed only in roots.

The protein localises to the endoplasmic reticulum membrane. It carries out the reaction 4-hydroxybenzoate + (2E)-geranyl diphosphate = 3-geranyl-4-hydroxybenzoate + diphosphate. Prenyltransferase involved in the biosynthesis of shikonin, a naphthoquinone secondary metabolite. Could accept only geranyl diphosphate and not dimethylallyl diphosphate, farnesyl diphosphate, or geranylgeranyl diphosphate as substrate. The chain is 4-hydroxybenzoate geranyltransferase 1 (PGT-1) from Lithospermum erythrorhizon (Purple gromwell).